A 521-amino-acid chain; its full sequence is U4/U6 small nuclear ribonucleoprotein Prp4 (521 aa).

Lys26 carries the post-translational modification N6-acetyllysine. WD repeat units follow at residues 228 to 267, 270 to 317, 320 to 359, 362 to 401, 404 to 443, 446 to 486, and 489 to 521; these read GDDR…LLHT, GHNT…PVAD, GHTV…EILH, GHSM…CIMF, GHLK…CVYT, AHQN…PLKT, and GHEG…WMAE.

In terms of assembly, component of the precatalytic spliceosome (spliceosome B complex). Component of the U4/U6-U5 tri-snRNP complex, a building block of the precatalytic spliceosome (spliceosome B complex). The U4/U6-U5 tri-snRNP complex is composed of the U4, U6 and U5 snRNAs and at least PRPF3, PRPF4, PRPF6, PRPF8, PRPF31, SNRNP200, TXNL4A, SNRNP40, SNRPB, SNRPD1, SNRPD2, SNRPD3, SNRPE, SNRPF, SNRPG, DDX23, CD2BP2, PPIH, SNU13, EFTUD2, SART1 and USP39, plus LSM2, LSM3, LSM4, LSM5, LSM6, LSM7 and LSM8. Interacts directly with PRPF18, PPIH and PRPF3. Part of a heteromeric complex containing PPIH, PRPF3 and PRPF4 that is stable in the absence of RNA. Interacts with ERCC6.

Its subcellular location is the nucleus. The protein localises to the nucleus speckle. Plays a role in pre-mRNA splicing as component of the U4/U6-U5 tri-snRNP complex that is involved in spliceosome assembly, and as component of the precatalytic spliceosome (spliceosome B complex). The chain is U4/U6 small nuclear ribonucleoprotein Prp4 (Prpf4) from Mus musculus (Mouse).